Consider the following 273-residue polypeptide: Outer surface protein A (273 aa).

Positions 1–16 (MKKYLLGIGLILALIA) are cleaved as a signal peptide. Cysteine 17 carries the N-palmitoyl cysteine lipid modification. The S-diacylglycerol cysteine moiety is linked to residue cysteine 17.

It belongs to the OspA lipoprotein family.

The protein localises to the cell outer membrane. It is found in the cell surface. The sequence is that of Outer surface protein A from Borreliella burgdorferi (Lyme disease spirochete).